The chain runs to 644 residues: Complement component C1q receptor (644 aa).

The first 22 residues, 1–22 (MAISTGLFLLLGLLGQPWAGAA), serve as a signal peptide directing secretion. Over 23–572 (ADSQAVVCEG…SAHSDTDGQN (550 aa)) the chain is Extracellular. The 143-residue stretch at 31–173 (EGTACYTAHW…CGTPEAPGNS (143 aa)) folds into the C-type lectin domain. The N-linked (GlcNAc...) asparagine glycan is linked to Asn-102. Intrachain disulfides connect Cys-140–Cys-164, Cys-261–Cys-272, Cys-268–Cys-282, Cys-284–Cys-297, Cys-303–Cys-314, Cys-308–Cys-325, Cys-327–Cys-340, Cys-346–Cys-355, Cys-351–Cys-364, Cys-366–Cys-380, Cys-386–Cys-397, Cys-393–Cys-406, Cys-408–Cys-422, Cys-428–Cys-440, Cys-436–Cys-449, and Cys-451–Cys-464. EGF-like domains lie at 257-298 (PKFG…VTCA) and 299-341 (SRNP…VHCV). N-linked (GlcNAc...) asparagine glycosylation occurs at Asn-322. One can recognise an EGF-like 3; calcium-binding domain in the interval 342 to 381 (DIDECQDSPCAQDCVNTLGSFHCECWVGYQPSGPKEEACE). The 42-residue stretch at 382-423 (DVDECAAANSPCAQGCINTDGSFYCSCKEGYIVSGEDSTQCE) folds into the EGF-like 4; calcium-binding domain. The region spanning 424–465 (DIDECSDARGNPCDSLCFNTDGSFRCGCPPGWELAPNGVFCS) is the EGF-like 5; calcium-binding domain. The segment at 473-508 (LPARPPQKEDNDDRKESTMPPTEMPSSPSGSKDVSN) is disordered. A compositionally biased stretch (basic and acidic residues) spans 478-489 (PQKEDNDDRKES). A compositionally biased stretch (low complexity) spans 490-501 (TMPPTEMPSSPS). The helical transmembrane segment at 573 to 593 (LLLFYILGTVVAISLLLVLAL) threads the bilayer. Residues 594 to 644 (GILIYHKRRAKKEEIKEKKPQNAADSYSWVPERAESQAPENQYSPTPGTDC) lie on the Cytoplasmic side of the membrane. A disordered region spans residues 605 to 644 (KEEIKEKKPQNAADSYSWVPERAESQAPENQYSPTPGTDC). Position 619 is a phosphoserine (Ser-619). Tyr-620 and Tyr-636 each carry phosphotyrosine. The segment covering 631 to 644 (APENQYSPTPGTDC) has biased composition (polar residues).

As to quaternary structure, homodimer. Interacts with C1QBP; the association may represent a cell surface C1q receptor. Interacts with surfactant protein A/SFTPA1. Interacts with multimerin-2/MMRN2. Interacts with DAG1; this interaction plays an important role in endothelial cell migration. Interacts with CBL. Interacts with IGFBP7. Interacts with VEGFR2. Post-translationally, N- and O-glycosylated. Phosphorylated on Tyr-620 and Tyr-636 by SRC; these phosphorylations promote endothelial cell adhesion and migration. As to expression, expressed in lung, heart and bone marrow. Expressed at lower level in ovary, whole embryo and fetal liver. Not detected in brain, adult liver or thymus. Highly expressed in peritoneal cavity and bone marrow macrophages. Not detected in epithelial cells.

Its subcellular location is the cell membrane. In terms of biological role, cell surface receptor that plays a role in various physiological processes including inflammation, phagocytosis, and cell adhesion. Plays a role in phagocytosis and enhances the uptake of apoptotic cells and immune complexes by acting as a receptor for defense collagens including surfactant protein A/SFTPA1, C1q, and mannose-binding lectin (MBL2). Plays a role in the regulation of endothelial cell function and adhesion by activating angiogenesis. Mechanistically, exerts its angiogenic function by associating with beta-dystroglycan, leading to SRC-dependent phosphorylation and subsequent recruitment of CBL. In turn, CBL provides a docking site for downstream signaling components, such as CRKL to enhance cell migration. Participates in angiogenesis also by acting as a receptor for the ECM pan-endothelial glycoprotein multimerin-2/MMRN2 and IGFBP7 ligands. Both ligands play a non-redundant role in CD93-mediated endothelial cell function. Acts as a key regulator of endothelial barrier function through modulating VEGFR2 function. This chain is Complement component C1q receptor (Cd93), found in Mus musculus (Mouse).